Consider the following 231-residue polypeptide: Small proline-rich protein 3 (231 aa).

Residues 1–104 (MSSYQQKQPF…GSGYSVVPQP (104 aa)) form a disordered region. Residue S2 is modified to N-acetylserine. Tandem repeats lie at residues 55–62 (EQGYVKIP), 63–70 (EQGSIKVP), 71–78 (DTGYTKIP), 79–86 (DSGNTKVP), 87–94 (ESGCTSVP), 95–102 (GSGYSVVP), 103–110 (QPGYTKVP), 111–118 (DQGYTKVP), 119–126 (ESGCTSVP), 127–134 (GSGYSVVP), 135–142 (QPGYTKVP), 143–150 (ESGCTSVP), 151–158 (GPGYPTVP), 159–166 (QPGYTKVP), 167–174 (ESGCTSVP), 175–182 (GSGYSVIP), 183–190 (QPSYTKVP), 191–198 (ESGCTSVP), 199–206 (GPGYPTVP), 207–214 (QPGYTKVQ), and 215–222 (EPNPSIVT). The tract at residues 55–222 (EQGYVKIPEQ…VQEPNPSIVT (168 aa)) is 21 X 8 AA approximate tandem repeats. Positions 80–94 (SGNTKVPESGCTSVP) are enriched in polar residues. The disordered stretch occupies residues 188-231 (KVPESGCTSVPGPGYPTVPQPGYTKVQEPNPSIVTPGLSQKKTK). Positions 214–231 (QEPNPSIVTPGLSQKKTK) are enriched in polar residues.

It belongs to the cornifin (SPRR) family. As to expression, suprabasal layers of the squamous epithelia of esophagus, tongue and oral mucosa.

It localises to the cytoplasm. Can serve as a substrate in transglutaminase-catalyzed cross linking reactions and can function as a cross-linked envelope precursor. This is Small proline-rich protein 3 (SPRR3) from Oryctolagus cuniculus (Rabbit).